We begin with the raw amino-acid sequence, 189 residues long: Peptidyl-tRNA hydrolase (189 aa).

Y14 contributes to the tRNA binding site. The active-site Proton acceptor is H19. TRNA is bound by residues Y64, N66, and N112.

Belongs to the PTH family. As to quaternary structure, monomer.

It is found in the cytoplasm. It catalyses the reaction an N-acyl-L-alpha-aminoacyl-tRNA + H2O = an N-acyl-L-amino acid + a tRNA + H(+). Its function is as follows. Hydrolyzes ribosome-free peptidyl-tRNAs (with 1 or more amino acids incorporated), which drop off the ribosome during protein synthesis, or as a result of ribosome stalling. Catalyzes the release of premature peptidyl moieties from peptidyl-tRNA molecules trapped in stalled 50S ribosomal subunits, and thus maintains levels of free tRNAs and 50S ribosomes. The chain is Peptidyl-tRNA hydrolase from Clostridium botulinum (strain Langeland / NCTC 10281 / Type F).